The primary structure comprises 511 residues: Cysteine--tRNA ligase 2, cytoplasmic (511 aa).

Cysteine 34 is a binding site for Zn(2+). Residues 36-46 carry the 'HIGH' region motif; the sequence is ITAYDFSHIGH. 3 residues coordinate Zn(2+): cysteine 214, histidine 239, and glutamate 243. Residues 271–275 carry the 'KMSKS' region motif; the sequence is KMAKS. Lysine 274 provides a ligand contact to ATP. TPR repeat units lie at residues 315-348 and 368-401; these read ESSS…DGGK and SKML…LKKM.

This sequence belongs to the class-I aminoacyl-tRNA synthetase family. Requires Zn(2+) as cofactor.

It localises to the cytoplasm. Its subcellular location is the cytosol. It catalyses the reaction tRNA(Cys) + L-cysteine + ATP = L-cysteinyl-tRNA(Cys) + AMP + diphosphate. The protein is Cysteine--tRNA ligase 2, cytoplasmic of Arabidopsis thaliana (Mouse-ear cress).